The following is a 315-amino-acid chain: Methionine import ATP-binding protein MetN (315 aa).

One can recognise an ABC transporter domain in the interval 2 to 219 (IEIEKVCVDF…PQHAFTQQLV (218 aa)). 16 to 23 (GTSGAGKS) is an ATP binding site.

The protein belongs to the ABC transporter superfamily. Methionine importer (TC 3.A.1.24) family. The complex is composed of two ATP-binding proteins (MetN), two transmembrane proteins (MetI) and a solute-binding protein (MetQ).

It localises to the cell inner membrane. The enzyme catalyses L-methionine(out) + ATP + H2O = L-methionine(in) + ADP + phosphate + H(+). It catalyses the reaction D-methionine(out) + ATP + H2O = D-methionine(in) + ADP + phosphate + H(+). In terms of biological role, part of the ABC transporter complex MetNIQ involved in methionine import. Responsible for energy coupling to the transport system. This is Methionine import ATP-binding protein MetN from Salmonella enteritidis.